The sequence spans 188 residues: Pyridoxal 5'-phosphate synthase subunit PdxT (188 aa).

Residue 46 to 48 (GES) coordinates L-glutamine. Cys-78 functions as the Nucleophile in the catalytic mechanism. L-glutamine-binding positions include Arg-106 and 132-133 (IR). Active-site charge relay system residues include His-169 and Glu-171.

Belongs to the glutaminase PdxT/SNO family. In the presence of PdxS, forms a dodecamer of heterodimers. Only shows activity in the heterodimer.

The enzyme catalyses aldehydo-D-ribose 5-phosphate + D-glyceraldehyde 3-phosphate + L-glutamine = pyridoxal 5'-phosphate + L-glutamate + phosphate + 3 H2O + H(+). It catalyses the reaction L-glutamine + H2O = L-glutamate + NH4(+). The protein operates within cofactor biosynthesis; pyridoxal 5'-phosphate biosynthesis. In terms of biological role, catalyzes the hydrolysis of glutamine to glutamate and ammonia as part of the biosynthesis of pyridoxal 5'-phosphate. The resulting ammonia molecule is channeled to the active site of PdxS. The polypeptide is Pyridoxal 5'-phosphate synthase subunit PdxT (Tropheryma whipplei (strain Twist) (Whipple's bacillus)).